A 415-amino-acid polypeptide reads, in one-letter code: Serine hydroxymethyltransferase (415 aa).

(6S)-5,6,7,8-tetrahydrofolate contacts are provided by residues Leu-121 and 125–127; that span reads GHL. N6-(pyridoxal phosphate)lysine is present on Lys-230.

This sequence belongs to the SHMT family. In terms of assembly, homodimer. It depends on pyridoxal 5'-phosphate as a cofactor.

The protein localises to the cytoplasm. The enzyme catalyses (6R)-5,10-methylene-5,6,7,8-tetrahydrofolate + glycine + H2O = (6S)-5,6,7,8-tetrahydrofolate + L-serine. It functions in the pathway one-carbon metabolism; tetrahydrofolate interconversion. It participates in amino-acid biosynthesis; glycine biosynthesis; glycine from L-serine: step 1/1. In terms of biological role, catalyzes the reversible interconversion of serine and glycine with tetrahydrofolate (THF) serving as the one-carbon carrier. This reaction serves as the major source of one-carbon groups required for the biosynthesis of purines, thymidylate, methionine, and other important biomolecules. Also exhibits THF-independent aldolase activity toward beta-hydroxyamino acids, producing glycine and aldehydes, via a retro-aldol mechanism. This Syntrophomonas wolfei subsp. wolfei (strain DSM 2245B / Goettingen) protein is Serine hydroxymethyltransferase.